The sequence spans 202 residues: Hypoxanthine-guanine phosphoribosyltransferase (202 aa).

2 residues coordinate diphosphate: lysine 66 and glycine 67. Residues glutamate 122 and aspartate 123 each coordinate Mg(2+). The Proton acceptor role is filled by aspartate 126. GMP contacts are provided by residues lysine 154, 175 to 176 (FV), and aspartate 182. Arginine 188 contributes to the diphosphate binding site.

The protein belongs to the purine/pyrimidine phosphoribosyltransferase family. In terms of assembly, homodimer and homotetramer in equilibrium. The presence or absence of divalent metal ions, as well as phosphate, can affect the oligomerization state of the enzyme. Likely functions as a tetramer (rather than a dimer) in its biological environment, which is the most active form. The dimeric structure is also active though ~50% of that of the tetramer. It depends on Mg(2+) as a cofactor.

It is found in the cytoplasm. It catalyses the reaction IMP + diphosphate = hypoxanthine + 5-phospho-alpha-D-ribose 1-diphosphate. The enzyme catalyses GMP + diphosphate = guanine + 5-phospho-alpha-D-ribose 1-diphosphate. It participates in purine metabolism; IMP biosynthesis via salvage pathway; IMP from hypoxanthine: step 1/1. Its pathway is purine metabolism; GMP biosynthesis via salvage pathway; GMP from guanine: step 1/1. With respect to regulation, competitively inhibited by acyclic nucleoside phosphonates (ANPs) with Ki values as low as 0.69 uM. Prodrugs of these compounds arrest the growth of a virulent strain of M.tuberculosis with MIC50 values as low as 4.5 uM and possess low cytotoxicity in mammalian cells. Inhibited by pyrrolidine nucleoside bisphosphonates, which are also able to arrest the growth of virulent M.tuberculosis not only in its replicating phase but also in its latent phase, and to arrest the growth of M.tuberculosis in infected macrophages while having low cytotoxicity in mammalian cells. Purine salvage pathway enzyme that catalyzes the transfer of the ribosyl-5-phosphate group from 5-phospho-alpha-D-ribose 1-diphosphate (PRPP) to the N9 position of the 6-oxopurines hypoxanthine and guanine to form the corresponding ribonucleotides IMP (inosine 5'-monophosphate) and GMP (guanosine 5'-monophosphate), with the release of PPi. Thus, specifically recycles hypoxanthine and guanine imported from the external medium, and converts them to IMP and GMP, respectively. Cannot use xanthine as substrate. The sequence is that of Hypoxanthine-guanine phosphoribosyltransferase from Mycobacterium tuberculosis (strain ATCC 25618 / H37Rv).